The primary structure comprises 134 residues: MGKDTIADIITSIRNADMNRKGTVRIESTNITESIVKILLREGFIENVRKHRENNQYFLILTLRHRRNKKESYKTILNLKRISRPGLRIYSNSQRIPRILGGIGIVILSTSQGIMTDREARLKRIGGEILCYIW.

Belongs to the universal ribosomal protein uS8 family. In terms of assembly, part of the 30S ribosomal subunit.

The protein resides in the plastid. Its subcellular location is the chloroplast. Its function is as follows. One of the primary rRNA binding proteins, it binds directly to 16S rRNA central domain where it helps coordinate assembly of the platform of the 30S subunit. In Arabis hirsuta (Hairy rock-cress), this protein is Small ribosomal subunit protein uS8c (rps8).